The following is a 351-amino-acid chain: Sulfate/thiosulfate import ATP-binding protein CysA (351 aa).

An ABC transporter domain is found at 5 to 235 (IVVADATKRY…PANAFVMSFL (231 aa)). Position 37–44 (37–44 (GPSGSGKS)) interacts with ATP.

This sequence belongs to the ABC transporter superfamily. Sulfate/tungstate importer (TC 3.A.1.6) family. As to quaternary structure, the complex is composed of two ATP-binding proteins (CysA), two transmembrane proteins (CysT and CysW) and a solute-binding protein (CysP).

The protein localises to the cell membrane. The enzyme catalyses sulfate(out) + ATP + H2O = sulfate(in) + ADP + phosphate + H(+). It carries out the reaction thiosulfate(out) + ATP + H2O = thiosulfate(in) + ADP + phosphate + H(+). In terms of biological role, part of the ABC transporter complex CysAWTP involved in sulfate/thiosulfate import. Responsible for energy coupling to the transport system. The chain is Sulfate/thiosulfate import ATP-binding protein CysA from Mycobacterium bovis (strain ATCC BAA-935 / AF2122/97).